Here is a 233-residue protein sequence, read N- to C-terminus: Purine nucleoside phosphorylase DeoD-type (233 aa).

His4 is an a purine D-ribonucleoside binding site. Phosphate contacts are provided by residues Gly20, Arg24, Arg43, and 87–90 (RIGT). Residues 179–181 (EME) and 203–204 (SD) each bind a purine D-ribonucleoside. Asp204 serves as the catalytic Proton donor.

This sequence belongs to the PNP/UDP phosphorylase family. Homohexamer; trimer of homodimers.

The catalysed reaction is a purine D-ribonucleoside + phosphate = a purine nucleobase + alpha-D-ribose 1-phosphate. The enzyme catalyses a purine 2'-deoxy-D-ribonucleoside + phosphate = a purine nucleobase + 2-deoxy-alpha-D-ribose 1-phosphate. Catalyzes the reversible phosphorolytic breakdown of the N-glycosidic bond in the beta-(deoxy)ribonucleoside molecules, with the formation of the corresponding free purine bases and pentose-1-phosphate. The chain is Purine nucleoside phosphorylase DeoD-type from Thermoanaerobacter pseudethanolicus (strain ATCC 33223 / 39E) (Clostridium thermohydrosulfuricum).